The following is a 539-amino-acid chain: Glucans biosynthesis protein D (539 aa).

The segment at residues 1 to 31 (MHRRNLLKASMALAAYTGLSASGLLAARAWA) is a signal peptide (tat-type signal).

The protein belongs to the OpgD/OpgG family. Predicted to be exported by the Tat system. The position of the signal peptide cleavage has not been experimentally proven.

Its subcellular location is the periplasm. Its pathway is glycan metabolism; osmoregulated periplasmic glucan (OPG) biosynthesis. Functionally, probably involved in the control of the structural glucose backbone of osmoregulated periplasmic glucans (OPGs). The protein is Glucans biosynthesis protein D of Pseudomonas fluorescens (strain ATCC BAA-477 / NRRL B-23932 / Pf-5).